The sequence spans 759 residues: Solute carrier family 26 member 6 (759 aa).

Topologically, residues 1 to 115 are cytoplasmic; it reads MGLADASGPR…PQGLAYALLA (115 aa). The helical transmembrane segment at 116–136 threads the bilayer; it reads GLPPVFGLYSSFYPVFIYFLF. Topologically, residues 137–186 are extracellular; the sequence is GTSRHISVGTFAVMSVMVGSVTESLAPQALNDSMINETARDAARVQVAST. N-linked (GlcNAc) asparagine glycans are attached at residues N167 and N172. A helical membrane pass occupies residues 187–207; the sequence is LSVLVGLFQVGLGLIHFGFVV. Residues 208-263 lie on the Cytoplasmic side of the membrane; sequence TYLSEPLVRGYTTAAAVQVFVSQLKYVFGLHLSSHSGPLSLIYTVLEVCWKLPQSK. Residues 264–284 traverse the membrane as a helical segment; it reads VGTVVTAAVAGVVLVVVKLLN. Over 285 to 293 the chain is Extracellular; sequence DKLQQQLPM. A helical membrane pass occupies residues 294 to 314; the sequence is PIPGELLTLIGATGISYGMGL. At 315–347 the chain is on the cytoplasmic side; it reads KHRFEVDVVGNIPAGLVPPVAPNTQLFSKLVGS. The helical transmembrane segment at 348–368 threads the bilayer; that stretch reads AFTIAVVGFAIAISLGKIFAL. Residues 369–379 lie on the Extracellular side of the membrane; that stretch reads RHGYRVDSNQE. A helical transmembrane segment spans residues 380–400; sequence LVALGLSNLIGGIFQCFPVSC. Over 401-416 the chain is Cytoplasmic; sequence SMSRSLVQESTGGNSQ. The helical transmembrane segment at 417-437 threads the bilayer; sequence VAGAISSLFILLIIVKLGELF. The Extracellular portion of the chain corresponds to 438-484; sequence HDLPKAVLAAIIIVNLKGMLRQLSDMRSLWKANRADLLIWLVTFTAT. Residues 485–505 form a helical membrane-spanning segment; sequence ILLNLDLGLVVAVIFSLLLVV. At 506 to 759 the chain is on the cytoplasmic side; it reads VRTQMPHYSV…PDSPVSVTRL (254 aa). The STAS domain maps to 530–742; it reads EYSEAKEVRG…ASVHDAVTFA (213 aa). N553 and K582 each carry phosphoserine; by PKC. Phosphoserine is present on S616. The disordered stretch occupies residues 636–657; it reads GDKMEDATANGQEDSKAPDGST. 2 positions are modified to phosphoserine: S752 and S755.

Belongs to the SLC26A/SulP transporter (TC 2.A.53) family. As to quaternary structure, interacts (via C-terminal domain) with PDZK1 (via C-terminal PDZ domain); the interaction induces chloride and oxalate exchange transport. Interacts with CFTR and SLC26A3. Interacts with AHCYL1; the interaction increases SLC26A6 activity. In terms of assembly, interacts with NHERF1 (via the PDZ domains) and NHERF2 (via the PDZ domains). Interacts (via C-terminal cytoplasmic domain) with CA2; the interaction stimulates chloride-bicarbonate exchange activity. Interacts with NHERF1 (via the PDZ domains) and NHERF2 (via the PDZ domains). Post-translationally, phosphorylated on serine residues by PKC; the phosphorylation disrupts interaction with carbonic anhydrase CA2 and reduces bicarbonate transport activity in a phorbol myristate acetate (PMA)-induced manner. In terms of processing, glycosylation at Asn-167 and Asn-172 positively regulates its chloride oxalate exchanger activity. As to expression, ubiquitous. Highest levels in kidney and pancreas. Lower expression in heart, skeletal muscle, liver and placenta. Also found in lung and brain. Ubiquitously expressed. Highest levels expressed in the kidney and pancreas. In terms of tissue distribution, expressed weakly in placenta, lung, liver and pancreas. As to expression, expressed in heart, brain, placenta, lung, liver, kidney, pancreas, spleen, thymus, prostate, testis and ovary.

It localises to the cell membrane. The protein localises to the apical cell membrane. The protein resides in the cytoplasmic vesicle membrane. It is found in the microsome. Its subcellular location is the basolateral cell membrane. It catalyses the reaction 2 hydrogencarbonate(in) + chloride(out) = 2 hydrogencarbonate(out) + chloride(in). The catalysed reaction is oxalate(in) + chloride(out) = oxalate(out) + chloride(in). It carries out the reaction oxalate(in) + formate(out) = oxalate(out) + formate(in). The enzyme catalyses oxalate(in) + sulfate(out) = oxalate(out) + sulfate(in). It catalyses the reaction 2 hydrogencarbonate(out) + sulfate(in) = 2 hydrogencarbonate(in) + sulfate(out). Oxalate transport activity is inhibited by 4,4'-diisothiocyanatostilbene-2,2'-disulfonic acid (DIDS). Its activity is regulated as follows. Chloride, bicarbonate and sulfate transport activities are inhibited by 4,4'-diisothiocyanatostilbene-2,2'-disulfonic acid (DIDS). Apical membrane anion-exchanger with wide epithelial distribution that plays a role as a component of the pH buffering system for maintaining acid-base homeostasis. Acts as a versatile DIDS-sensitive inorganic and organic anion transporter that mediates the uptake of monovalent anions like chloride, bicarbonate, formate and hydroxyl ion and divalent anions like sulfate and oxalate. Functions in multiple exchange modes involving pairs of these anions, which include chloride-bicarbonate, chloride-oxalate, oxalate-formate, oxalate-sulfate and chloride-formate exchange. Apical membrane chloride-bicarbonate exchanger that mediates luminal chloride absorption and bicarbonate secretion by the small intestinal brush border membrane and contributes to intracellular pH regulation in the duodenal upper villous epithelium during proton-coupled peptide absorption, possibly by providing a bicarbonate import pathway. Also mediates intestinal chloride absorption and oxalate secretion, thereby preventing hyperoxaluria and calcium oxalate urolithiasis. Transepithelial oxalate secretion, chloride-formate, chloride-oxalate and chloride-bicarbonate transport activities in the duodenum are inhibited by PKC activation in a calcium-independent manner. The apical membrane chloride-bicarbonate exchanger also provides a major route for fluid and bicarbonate secretion into the proximal tubules of the kidney as well as into the proximal part of the interlobular pancreatic ductal tree, where it mediates electrogenic chloride-bicarbonate exchange with a chloride-bicarbonate stoichiometry of 1:2, and hence will dilute and alkalinize protein-rich acinar secretion. Also mediates the transcellular sulfate absorption and oxalate secretion across the apical membrane in the duodenum and the formate ion efflux at the apical brush border of cells in the proximal tubules of kidney. Plays a role in sperm capacitation by increasing intracellular pH. Its function is as follows. Apical membrane chloride-bicarbonate exchanger. Its association with carbonic anhydrase CA2 forms a bicarbonate transport metabolon; hence maximizes the local concentration of bicarbonate at the transporter site. The polypeptide is Solute carrier family 26 member 6 (SLC26A6) (Homo sapiens (Human)).